The primary structure comprises 564 residues: Dihydroxy-acid dehydratase (564 aa).

C50 serves as a coordination point for [2Fe-2S] cluster. D82 serves as a coordination point for Mg(2+). Residue C123 participates in [2Fe-2S] cluster binding. Mg(2+) is bound by residues D124 and K125. K125 carries the N6-carboxylysine modification. C195 is a binding site for [2Fe-2S] cluster. E447 contacts Mg(2+). S473 acts as the Proton acceptor in catalysis.

Belongs to the IlvD/Edd family. In terms of assembly, homodimer. It depends on [2Fe-2S] cluster as a cofactor. Requires Mg(2+) as cofactor.

It catalyses the reaction (2R)-2,3-dihydroxy-3-methylbutanoate = 3-methyl-2-oxobutanoate + H2O. The catalysed reaction is (2R,3R)-2,3-dihydroxy-3-methylpentanoate = (S)-3-methyl-2-oxopentanoate + H2O. Its pathway is amino-acid biosynthesis; L-isoleucine biosynthesis; L-isoleucine from 2-oxobutanoate: step 3/4. It functions in the pathway amino-acid biosynthesis; L-valine biosynthesis; L-valine from pyruvate: step 3/4. Functionally, functions in the biosynthesis of branched-chain amino acids. Catalyzes the dehydration of (2R,3R)-2,3-dihydroxy-3-methylpentanoate (2,3-dihydroxy-3-methylvalerate) into 2-oxo-3-methylpentanoate (2-oxo-3-methylvalerate) and of (2R)-2,3-dihydroxy-3-methylbutanoate (2,3-dihydroxyisovalerate) into 2-oxo-3-methylbutanoate (2-oxoisovalerate), the penultimate precursor to L-isoleucine and L-valine, respectively. The chain is Dihydroxy-acid dehydratase from Chloroflexus aggregans (strain MD-66 / DSM 9485).